Consider the following 265-residue polypeptide: NAD kinase (265 aa).

Residue D45 is the Proton acceptor of the active site. Residues 45 to 46 (DG), 121 to 122 (NE), R147, D149, A184, and Q221 each bind NAD(+).

It belongs to the NAD kinase family. A divalent metal cation is required as a cofactor.

It is found in the cytoplasm. It catalyses the reaction NAD(+) + ATP = ADP + NADP(+) + H(+). Functionally, involved in the regulation of the intracellular balance of NAD and NADP, and is a key enzyme in the biosynthesis of NADP. Catalyzes specifically the phosphorylation on 2'-hydroxyl of the adenosine moiety of NAD to yield NADP. In Leuconostoc citreum (strain KM20), this protein is NAD kinase.